Reading from the N-terminus, the 259-residue chain is Ribonuclease HII (259 aa).

Residues 70-258 (TLIAGIDEVG…VKSLVLGKKE (189 aa)) form the RNase H type-2 domain. Positions 76, 77, and 168 each coordinate a divalent metal cation.

The protein belongs to the RNase HII family. Mn(2+) serves as cofactor. Requires Mg(2+) as cofactor.

Its subcellular location is the cytoplasm. It catalyses the reaction Endonucleolytic cleavage to 5'-phosphomonoester.. In terms of biological role, endonuclease that specifically degrades the RNA of RNA-DNA hybrids. In Streptococcus pneumoniae (strain 70585), this protein is Ribonuclease HII.